The primary structure comprises 560 residues: Choline/ethanolamine transporter FLVCR1 (560 aa).

A disordered region spans residues Met-1–Glu-43. Residues Met-1–Pro-92 are Cytoplasmic-facing. The chain crosses the membrane as a helical span at residues Arg-93 to Gln-117. Residues Trp-118–Ser-135 are Extracellular-facing. Residues Pro-136 to Thr-163 form a helical membrane-spanning segment. Over Arg-164–Gly-165 the chain is Cytoplasmic. A helical transmembrane segment spans residues Leu-166–Cys-185. At Gly-186–Leu-192 the chain is on the extracellular side. The chain crosses the membrane as a helical span at residues Phe-193–Trp-221. Residue Gln-207 coordinates ethanolamine. Residues Phe-222 to Glu-226 are Cytoplasmic-facing. A helical transmembrane segment spans residues Val-227–Leu-252. Over Val-253–Asn-270 the chain is Extracellular. N-linked (GlcNAc...) asparagine glycosylation occurs at Asn-270. A helical membrane pass occupies residues Asn-271 to Ala-300. Topologically, residues Phe-301–Asn-336 are cytoplasmic. A helical transmembrane segment spans residues Ile-337 to Tyr-367. At Tyr-368–Glu-371 the chain is on the extracellular side. The helical transmembrane segment at Glu-372–Thr-400 threads the bilayer. Residues Lys-401–Thr-402 are Cytoplasmic-facing. A helical membrane pass occupies residues Tyr-403–Leu-425. Residues Asn-426 to Gly-428 are Extracellular-facing. A helical transmembrane segment spans residues Tyr-429–Ile-458. The Cytoplasmic portion of the chain corresponds to Thr-459–Met-466. A helical transmembrane segment spans residues Ser-467–Asp-492. An ethanolamine-binding site is contributed by Gln-476. Gln-476 serves as a coordination point for choline. Over Tyr-493–Ser-495 the chain is Extracellular. Residues Pro-496 to Lys-518 traverse the membrane as a helical segment. At Ser-519–Leu-560 the chain is on the cytoplasmic side. Phosphoserine is present on Ser-542.

The protein belongs to the major facilitator superfamily. Feline leukemia virus subgroup C receptor (TC 2.A.1.28.1) family.

It localises to the cell membrane. It catalyses the reaction choline(out) = choline(in). The enzyme catalyses ethanolamine(in) = ethanolamine(out). It carries out the reaction heme b(in) = heme b(out). Uniporter that mediates the transport of extracellular choline and ethanolamine into cells, thereby playing a key role in phospholipid biosynthesis. Choline and ethanolamine are the precursors of phosphatidylcholine and phosphatidylethanolamine, respectively, the two most abundant phospholipids. Transport is not coupled with proton transport and is exclusively driven by the choline (or ethanolamine) gradient across the plasma membrane. Also acts as a heme b transporter that mediates heme efflux from the cytoplasm to the extracellular compartment. The protein is Choline/ethanolamine transporter FLVCR1 (Flvcr1) of Mus terricolor (Earth-colored mouse).